The chain runs to 938 residues: Translation initiation factor IF-2 (938 aa).

Basic and acidic residues predominate over residues 57–205 (DKSKKVASKE…PKSEETKSEE (149 aa)). Residues 57–350 (DKSKKVASKE…RSADDLAQQE (294 aa)) are disordered. Acidic residues predominate over residues 206–215 (TTEGGESEEK). Over residues 248–259 (KKEEKKEDDKKD) the composition is skewed to basic and acidic residues. 2 stretches are compositionally biased toward basic residues: residues 260-270 (KDRRKKRRRRI) and 285-296 (GAKKGGRTRSKP). A compositionally biased stretch (basic and acidic residues) spans 297 to 319 (ITKEEPTEEEVQKQVRETLEKLQ). Residues 323-333 (SKGKGAKYRRQ) show a composition bias toward basic residues. Residues 334 to 344 (KRDEHRQRSAD) show a composition bias toward basic and acidic residues. Positions 434 to 602 (TRAPIVTVMG…KVLLEAEILE (169 aa)) constitute a tr-type G domain. Residues 443-450 (GHVDHGKT) form a G1 region. 443–450 (GHVDHGKT) lines the GTP pocket. The interval 468–472 (GITQH) is G2. A G3 region spans residues 490 to 493 (DTPG). GTP contacts are provided by residues 490 to 494 (DTPGH) and 544 to 547 (NKSD). Residues 544-547 (NKSD) are G4. The interval 580-582 (SAK) is G5.

Belongs to the TRAFAC class translation factor GTPase superfamily. Classic translation factor GTPase family. IF-2 subfamily.

Its subcellular location is the cytoplasm. Its function is as follows. One of the essential components for the initiation of protein synthesis. Protects formylmethionyl-tRNA from spontaneous hydrolysis and promotes its binding to the 30S ribosomal subunits. Also involved in the hydrolysis of GTP during the formation of the 70S ribosomal complex. In Christiangramia forsetii (strain DSM 17595 / CGMCC 1.15422 / KT0803) (Gramella forsetii), this protein is Translation initiation factor IF-2.